Here is a 472-residue protein sequence, read N- to C-terminus: Keratin, type I cytoskeletal 14 (472 aa).

Residues 1–114 (MTTCSRQFTS…AGGDGLLVGS (114 aa)) form a head region. Residues 115–150 (EKVTMQNLNDRLASYLDKVRALEEANADLEVKIRDW) form a coil 1A region. The 312-residue stretch at 115–426 (EKVTMQNLND…RLLEGEDAHL (312 aa)) folds into the IF rod domain. Positions 151–168 (YQRQRPAEIKDYSPYFKT) are linker 1. Residues 169–260 (IEDLRNKILT…KNHEEEMNAL (92 aa)) are coil 1B. The linker 12 stretch occupies residues 261–283 (RGQVGGDVNVEMDAAPGVDLSRI). Residues 284-422 (LNEMRDQYEK…ATYRRLLEGE (139 aa)) are coil 2. Residues 423 to 472 (DAHLSSSQFSSGSQSSRDVTSSSRQIRTKVMDVHDGKVVSTHEQVLRTKN) form a tail region. An interaction with Type I keratins and keratin filaments region spans residues 425–472 (HLSSSQFSSGSQSSRDVTSSSRQIRTKVMDVHDGKVVSTHEQVLRTKN). The disordered stretch occupies residues 426-472 (LSSSQFSSGSQSSRDVTSSSRQIRTKVMDVHDGKVVSTHEQVLRTKN). A compositionally biased stretch (low complexity) spans 427-445 (SSSQFSSGSQSSRDVTSSS). Ser-435 is subject to Phosphoserine.

This sequence belongs to the intermediate filament family. Heterotetramer of two type I and two type II keratins. Forms a disulfide-linked heterodimer (via 2B domains) with KRT5 (via 2B domains). Forms a heterodimer with KRT1; the interaction is more abundant in the absence of KRT5. Interacts with PLEC isoform 1C, when in a heterodimer with KRT5. Interacts with TRADD and with keratin filaments. Associates with other type I keratins. Interacts with EPPK1. Interacts with KLHL24. Interacts with PKP1 (via N-terminus) and PKP2. A disulfide bond is formed between rather than within filaments and promotes the formation of a keratin filament cage around the nucleus. In terms of processing, ubiquitinated by the BCR(KLHL24) E3 ubiquitin ligase complex. As to expression, expressed in the corneal epithelium (at protein level). Detected in the basal layer, lowered within the more apically located layers specifically in the stratum spinosum, stratum granulosum but is not detected in stratum corneum. Strongly expressed in the outer root sheath of anagen follicles but not in the germinative matrix, inner root sheath or hair. Found in keratinocytes surrounding the club hair during telogen.

Its subcellular location is the cytoplasm. It is found in the nucleus. The nonhelical tail domain is involved in promoting KRT5-KRT14 filaments to self-organize into large bundles and enhances the mechanical properties involved in resilience of keratin intermediate filaments in vitro. The protein is Keratin, type I cytoskeletal 14 (KRT14) of Homo sapiens (Human).